The chain runs to 349 residues: Probable protease SohB (349 aa).

The Periplasmic portion of the chain corresponds to 1-8 (MELLSEYG). A helical membrane pass occupies residues 9–29 (LFLAKIVTVVLAIAAIAAIIV). Over 30-349 (NVAQRNKRQR…WWQRGQKPLM (320 aa)) the chain is Cytoplasmic. Catalysis depends on serine 178, which acts as the Nucleophile. Lysine 230 functions as the Proton donor/acceptor in the catalytic mechanism.

The protein belongs to the peptidase S49 family.

Its subcellular location is the cell inner membrane. Functionally, multicopy suppressor of the HtrA (DegP) null phenotype. It is possibly a protease, not essential for bacterial viability. The polypeptide is Probable protease SohB (sohB) (Escherichia coli (strain K12)).